The following is an 83-amino-acid chain: Small ribosomal subunit protein bS16 (83 aa).

This sequence belongs to the bacterial ribosomal protein bS16 family.

This Pseudomonas aeruginosa (strain UCBPP-PA14) protein is Small ribosomal subunit protein bS16.